The sequence spans 268 residues: Transcription initiation factor TFIID subunit 14b (268 aa).

Polar residues predominate over residues 1-20 (MTNSSSSKKQAQDQPETSEP). The tract at residues 1–36 (MTNSSSSKKQAQDQPETSEPTLKSLKTKMTKSDEKQ) is disordered. A YEATS domain is found at 38–182 (KLKDIEISVP…ESFLARVQNH (145 aa)). Positions 229-263 (DELLQLAAARQQVQAHIAKLRRQISLLEGQNQTVK) form a coiled coil.

This sequence belongs to the YAF9 family. As to quaternary structure, component of the TFIID complex. TFIID is composed of TATA binding protein (TBP) and a number of TBP-associated factors (TAFs) whose MWs range from 14-217 kDa. Interacts with TAF1, TAF4B and TAF12B. Component of the SWR1 chromatin-remodeling complex. Interacts with FLX, a component of the transcription activator complex FRI-C. Interacts with SWC4, and with EAF1A and EAF1B (via HSA domain). In terms of tissue distribution, expressed in roots, leaves, inflorescence and flowering tissues.

It is found in the cytoplasm. Its subcellular location is the nucleus. Its function is as follows. Negative regulator of flowering controlling the H4K5 acetylation levels in the FLC and FT chromatin. Positively regulates FLC expression. Component of the transcription factor IID (TFIID) complex that is essential for mediating regulation of RNA polymerase transcription. Component of the SWR1 complex which mediates the ATP-dependent exchange of histone H2A for the H2A variant HZT1 leading to transcriptional regulation of selected genes by chromatin remodeling. Component of a NuA4 histone acetyltransferase complex which is involved in transcriptional activation of selected genes principally by acetylation of nucleosomal histones H4 and H2A. The sequence is that of Transcription initiation factor TFIID subunit 14b from Arabidopsis thaliana (Mouse-ear cress).